The primary structure comprises 594 residues: Proteasome-associated ATPase (594 aa).

Residues 1–12 are compositionally biased toward polar residues; sequence MTETSANKPENT. A disordered region spans residues 1 to 20; the sequence is MTETSANKPENTQAHEGRDY. The stretch at 18–71 forms a coiled coil; it reads RDYSVLERQFNVLRDKLRNVDRQLAAATQNNTKMTTTLQSAKAEILRLKSALEK. Residue 282 to 287 coordinates ATP; sequence GCGKTL. The docks into pockets in the proteasome alpha-ring stretch occupies residues 593–594; it reads YL.

It belongs to the AAA ATPase family. In terms of assembly, homohexamer. Assembles into a hexameric ring structure that caps the 20S proteasome core. Strongly interacts with the prokaryotic ubiquitin-like protein Pup through a hydrophobic interface; the interacting region of ARC lies in its N-terminal coiled-coil domain. There is one Pup binding site per ARC hexamer ring. Upon ATP-binding, the C-terminus of ARC interacts with the alpha-rings of the proteasome core, possibly by binding to the intersubunit pockets.

It participates in protein degradation; proteasomal Pup-dependent pathway. Functionally, ATPase which is responsible for recognizing, binding, unfolding and translocation of pupylated proteins into the bacterial 20S proteasome core particle. May be essential for opening the gate of the 20S proteasome via an interaction with its C-terminus, thereby allowing substrate entry and access to the site of proteolysis. Thus, the C-termini of the proteasomal ATPase may function like a 'key in a lock' to induce gate opening and therefore regulate proteolysis. In Renibacterium salmoninarum (strain ATCC 33209 / DSM 20767 / JCM 11484 / NBRC 15589 / NCIMB 2235), this protein is Proteasome-associated ATPase.